A 323-amino-acid chain; its full sequence is Sphingomyelinase D (323 aa).

Positions 1–20 are cleaved as a signal peptide; the sequence is MISLLRLCSFLAAGSILVQG. Residue H59 is part of the active site. Mg(2+)-binding residues include E79, D81, and D127. Residues 308–315 carry the SMD-tail motif; the sequence is ATNDDNPW.

It belongs to the sphingomyelinase D/phospholipase D family. Mg(2+) is required as a cofactor.

It is found in the secreted. It catalyses the reaction a sphingomyelin + H2O = an N-acylsphing-4-enine 1-phosphate + choline + H(+). Catalyzes the hydrolysis of sphingomyelin. Sphingomyelinases D are produced by some spider in their venoms, but also by arthropods such as ticks, or pathogenic bacteria and fungi. They might play a role in pathogenicity through different mechanisms, such as membrane destabilization and host cell penetration, but also pulmonary inflammation and cutaneous lesions. The protein is Sphingomyelinase D of Trichophyton rubrum (strain ATCC MYA-4607 / CBS 118892) (Athlete's foot fungus).